Consider the following 307-residue polypeptide: Ribonuclease Z (307 aa).

Positions 61, 63, 65, 66, 138, 208, and 264 each coordinate Zn(2+). The Proton acceptor role is filled by D65.

Belongs to the RNase Z family. As to quaternary structure, homodimer. Zn(2+) is required as a cofactor.

It carries out the reaction Endonucleolytic cleavage of RNA, removing extra 3' nucleotides from tRNA precursor, generating 3' termini of tRNAs. A 3'-hydroxy group is left at the tRNA terminus and a 5'-phosphoryl group is left at the trailer molecule.. Functionally, zinc phosphodiesterase, which displays some tRNA 3'-processing endonuclease activity. Probably involved in tRNA maturation, by removing a 3'-trailer from precursor tRNA. The sequence is that of Ribonuclease Z from Pyrococcus horikoshii (strain ATCC 700860 / DSM 12428 / JCM 9974 / NBRC 100139 / OT-3).